A 306-amino-acid polypeptide reads, in one-letter code: MELKDYYAIMGVKPTDDLKTIKTAYRRLARKYHPDVSKEPDAEARFKEVAEAWEVLSDEQRRAEYDQMWQHRNDPQFNRQFHHGDGQSFNAEDFDDIFSSIFGQHARQSRQRPATRGHDIEIEVAVFLEETLTEHKRTISYNLPVYNAFGMIEQEIPKTLNVKIPAGVGNGQRIRLKGQGTPGENGGPNGDLWLVIHIAPHPLFDIVGQDLEIVVPVSPWEAALGTKVTVPTLKESILLTIPPGSQAGQRLRVKGKGLVSKKQTGDLYAVLKIVMPPKPDENTAALWQQLADAQSSFDPRKDWGKA.

The 65-residue stretch at 5–69 (DYYAIMGVKP…QRRAEYDQMW (65 aa)) folds into the J domain.

Its subcellular location is the cytoplasm. The protein localises to the nucleoid. DNA-binding protein that preferentially recognizes a curved DNA sequence. It is probably a functional analog of DnaJ; displays overlapping activities with DnaJ, but functions under different conditions, probably acting as a molecular chaperone in an adaptive response to environmental stresses other than heat shock. Lacks autonomous chaperone activity; binds native substrates and targets them for recognition by DnaK. Its activity is inhibited by the binding of CbpM. This Escherichia coli O127:H6 (strain E2348/69 / EPEC) protein is Curved DNA-binding protein.